An 896-amino-acid chain; its full sequence is Androgen receptor (896 aa).

Residues 1–534 (MEVQLGLGRV…PIDYYFPPQK (534 aa)) are modulating. Residues 1–563 (MEVQLGLGRV…GSCKVFFKRA (563 aa)) form an interaction with ZNF318 region. Disordered regions lie at residues 35-152 (QNPG…LSLL) and 178-218 (LLQQ…YLGG). Positions 54–78 (LQQQQLQQQETSPRRQQQQQQQPSE) are enriched in low complexity. S65 carries the phosphoserine; by CDK9 modification. S81 carries the post-translational modification Phosphoserine. Residues 178–189 (LLQQQQQQQQQQ) show a composition bias toward low complexity. A compositionally biased stretch (polar residues) spans 190–199 (EAVSEGNSSG). Residue Y215 is modified to Phosphotyrosine; by CSK. Residue S248 is modified to Phosphoserine. Phosphotyrosine; by CSK and TNK2 is present on Y259. 4 positions are modified to phosphotyrosine; by CSK: Y299, Y338, Y349, and Y354. Y355 is subject to Phosphotyrosine; by CSK and TNK2. Residue K378 forms a Glycyl lysine isopeptide (Lys-Gly) (interchain with G-Cter in SUMO) linkage. Y385 carries the post-translational modification Phosphotyrosine; by CSK. K497 participates in a covalent cross-link: Glycyl lysine isopeptide (Lys-Gly) (interchain with G-Cter in SUMO). Y511 and Y528 each carry phosphotyrosine; by CSK. Residues 528–895 (YYFPPQKTCL…GKVKPIYFHT (368 aa)) are interaction with LPXN. The nuclear receptor DNA-binding region spans 535-608 (TCLICGDEAS…AGMTLGARKL (74 aa)). 2 consecutive NR C4-type zinc fingers follow at residues 536–556 (CLIC…CGSC) and 572–596 (CASR…LRKC). The interaction with HIPK3 stretch occupies residues 548-638 (YGALTCGSCK…TEEPAQKLTV (91 aa)). The interaction with CCAR1 stretch occupies residues 568-895 (QKYLCASRND…GKVKPIYFHT (328 aa)). The interaction with KAT7 stretch occupies residues 601-895 (MTLGARKLKK…GKVKPIYFHT (295 aa)). S627 carries the post-translational modification Phosphoserine; by STK4/MST1. One can recognise an NR LBD domain in the interval 645–876 (ECQPIFLNVL…DFPEMMAEII (232 aa)). Positions 682 and 729 each coordinate 17beta-hydroxy-5alpha-androstan-3-one. Glycyl lysine isopeptide (Lys-Gly) (interchain with G-Cter in ubiquitin) cross-links involve residues K822 and K824. T854 provides a ligand contact to 17beta-hydroxy-5alpha-androstan-3-one. Phosphotyrosine; by CSK is present on Y892.

Belongs to the nuclear hormone receptor family. NR3 subfamily. In terms of assembly, binds DNA as a homodimer. Part of a ternary complex containing AR, EFCAB6/DJBP and PARK7. Interacts with HIPK3 and NR0B2 in the presence of androgen. The ligand binding domain interacts with KAT7/HBO1 in the presence of dihydrotestosterone. Interacts with EFCAB6/DJBP, PQBP1, RANBP9, RBAK, SPDEF, SRA1, TGFB1I1 and RREB1. Interacts with ZMIZ1/ZIMP10 and ZMIZ2/ZMIP7 which both enhance its transactivation activity. Interacts with SLC30A9 and RAD54L2/ARIP4. Interacts with MACROD1 (via macro domain). Interacts via the ligand-binding domain with LXXLL and FXXLF motifs from NCOA1, NCOA2, NCOA3 and MAGEA11. Interacts (via nuclear receptor DNA binding domain and nuclear receptor ligand binding domain) with NCOA4. The AR N-terminal poly-Gln region binds Ran resulting in enhancement of AR-mediated transactivation. Ran-binding decreases as the poly-Gln length increases. Interacts with HIP1 (via coiled coil domain). Interacts (via ligand-binding domain) with TRIM68. Interacts with TNK2. Interacts with USP26. Interacts with RNF6. Interacts (regulated by RNF6 probably through polyubiquitination) with RNF14; regulates AR transcriptional activity. Interacts with PRMT2 and TRIM24. Interacts with RACK1. Interacts with RANBP10; this interaction enhances dihydrotestosterone-induced AR transcriptional activity. Interacts with PRPF6 in a hormone-independent way; this interaction enhances dihydrotestosterone-induced AR transcriptional activity. Interacts with STK4/MST1. Interacts with ZIPK/DAPK3. Interacts with LPXN. Interacts with MAK. Part of a complex containing AR, MAK and NCOA3. Interacts with CRY1. Interacts with CCAR1 and GATA2. Interacts with ZNF318. Interacts with BUD31. Interacts with ARID4A. Interacts with ARID4B. Interacts (via NR LBD domain) with ZBTB7A; the interaction is direct and androgen-dependent. Interacts with NCOR1. Interacts with NCOR2. Interacts with CRY2 in a ligand-dependent manner. Phosphorylated in prostate cancer cells in response to several growth factors including EGF. Phosphorylation is induced by c-Src kinase (CSK). Tyr-511 is one of the major phosphorylation sites and an increase in phosphorylation and Src kinase activity is associated with prostate cancer progression. Phosphorylation by TNK2 enhances the DNA-binding and transcriptional activity. Phosphorylation at Ser-65 by CDK9 regulates AR promoter selectivity and cell growth. In terms of processing, sumoylated on Lys-378 (major) and Lys-497. Ubiquitinated. Deubiquitinated by USP26. 'Lys-6' and 'Lys-27'-linked polyubiquitination by RNF6 modulates AR transcriptional activity and specificity. Post-translationally, palmitoylated by ZDHHC7 and ZDHHC21. Palmitoylation is required for plasma membrane targeting and for rapid intracellular signaling via ERK and AKT kinases and cAMP generation.

It is found in the nucleus. The protein resides in the cytoplasm. In terms of biological role, steroid hormone receptors are ligand-activated transcription factors that regulate eukaryotic gene expression and affect cellular proliferation and differentiation in target tissues. Transcription factor activity is modulated by bound coactivator and corepressor proteins like ZBTB7A that recruits NCOR1 and NCOR2 to the androgen response elements/ARE on target genes, negatively regulating androgen receptor signaling and androgen-induced cell proliferation. Transcription activation is also down-regulated by NR0B2. Activated, but not phosphorylated, by HIPK3 and ZIPK/DAPK3. The sequence is that of Androgen receptor (AR) from Sus scrofa (Pig).